A 415-amino-acid chain; its full sequence is Protrudin (415 aa).

The disordered stretch occupies residues 1 to 24 (MQTSDRDLSGPEASPSGMPEVLSE). Over 1–66 (MQTSDRDLSG…AGDGVRYLLR (66 aa)) the chain is Cytoplasmic. The sufficient for homooligomerization stretch occupies residues 1–92 (MQTSDRDLSG…LFLTLNEGAW (92 aa)). A sufficient for localization to endoplasmic reticulum tubular network and for interactions with REEP1, REEP5, ATL1, ATL2, ATL3 and SPAST region spans residues 1–210 (MQTSDRDLSG…LYLLPLCWVL (210 aa)). A necessary for interaction with RAB11A and function in neurite outgrowth region spans residues 51-64 (LEPLKDAGDGVRYL). Residues 67–87 (WQMPLCSLLTCLGLNILFLTL) form a helical membrane-spanning segment. A topological domain (lumenal) is located at residue N88. The chain crosses the membrane as a helical span at residues 89-109 (EGAWYSMGALMISVPALLGYL). Topologically, residues 110-192 (QEVCRGQLPE…NPVVSSQFYG (83 aa)) are cytoplasmic. An intramembrane region (helical) is located at residues 193 to 213 (ALLGMVCMLYLLPLCWVLALL). At 214-415 (NSTLFLGNGD…CASCNQTLSK (202 aa)) the chain is on the cytoplasmic side. The disordered stretch occupies residues 254–290 (QGAGGRGLLDSSPAPTPTEDLTPGSVEEAEEAEPDEE). A necessary for interaction with KIF5A region spans residues 275-365 (TPGSVEEAEE…GCAATFSVLK (91 aa)). A compositionally biased stretch (acidic residues) spans 280 to 290 (EEAEEAEPDEE). The interval 290 to 296 (EFKDAIE) is necessary for interaction with VAPA. An FYVE-type zinc finger spans residues 348–414 (TNNFGNCAGC…VCASCNQTLS (67 aa)). Residues C354, C357, C370, C373, C378, C381, C406, and C409 each contribute to the Zn(2+) site.

Can form homooligomers (monomers, dimers and tetramers). Interacts with RAB11A (GDP-bound form); regulates RAB11A. Interacts with FKBP8; may negatively regulate ZFYVE27 phosphorylation. Isoform 1 interacts to a greater extent than isoform 2 with VAPB (via MSP domain). Isoform 1 interacts to a greater extent than isoform 2 with VAPA (via MSP domain). Interaction with VAPA may regulate ZFYVE27 retention in the endoplasmic reticulum and its function in cell projections formation. Interacts with ATL2, ATL3, SPAST and RTN3. Interacts with REEP1, REEP5 and ATL1. Interacts with RAB11B (GDP-bound form), SURF4, KIF5B and KIF5C. Isoform 1 and 2 interact with KIFA. Post-translationally, phosphorylated. Phosphorylation is induced by NGF through the MAPK/ERK pathway and modulates interaction with RAB11A. In terms of tissue distribution, astrocytes express both isoform 1 and isoform 2 and oligodendrocytes express only isoform 2 (at protein level). Isoform 1 is expressed specifically in the central nervous system and selectively in neuronal cells. Isoform 2 is expressed in cerebrum, cerebellum, spinal cord, heart, thymus, spleen, intestine and lung.

Its subcellular location is the recycling endosome membrane. It localises to the endoplasmic reticulum membrane. The protein resides in the cell projection. It is found in the growth cone membrane. Functionally, key regulator of RAB11-dependent vesicular trafficking during neurite extension through polarized membrane transport. Promotes axonal elongation and contributes to the establishment of neuronal cell polarity. Involved in nerve growth factor-induced neurite formation in VAPA-dependent manner. Contributes to both the formation and stabilization of the tubular ER network. Involved in ER morphogenesis by regulating the sheet-to-tubule balance and possibly the density of tubule interconnections. Acts as an adapter protein that facilitates the interaction of KIF5A with VAPA, VAPB, SURF4, RAB11A, RAB11B and RTN3 and the ZFYVE27-KIF5A complex contributes to the transport of these proteins in neurons. Can induce formation of neurite-like membrane protrusions in non-neuronal cells in a KIF5A/B-dependent manner. The protein is Protrudin (Zfyve27) of Mus musculus (Mouse).